Reading from the N-terminus, the 382-residue chain is Proton extrusion protein PxcA (382 aa).

4 helical membrane-spanning segments follow: residues 162–182 (VLLLLVLVPLLVSQISGTYLI), 257–277 (AIKNVFADLAGLIAFAVVCLM), 305–325 (IILFTDIFVGYHSPEGWSVLL), and 340–360 (FVNLFIATFPVVLATIFKYWI).

This sequence belongs to the CemA family.

The protein resides in the cell inner membrane. In terms of biological role, required for H(+) efflux immediately after light irradiation to form a rapid H(+) concentration gradient across the thylakoid membranes. Together with PxcL, contributes to transient H(+) uptake following dark to light transition. The sequence is that of Proton extrusion protein PxcA from Synechococcus sp. (strain CC9605).